The chain runs to 58 residues: uncharacterized protein (58 aa).

The next 2 helical transmembrane spans lie at Ile-7–Thr-27 and Tyr-29–Ile-49.

Its subcellular location is the cell membrane. This is an uncharacterized protein from Bacillus subtilis (strain 168).